The primary structure comprises 508 residues: Flavonoid 3'-monooxygenase CYP75B137 (508 aa).

The helical transmembrane segment at 2-22 threads the bilayer; it reads LTFFFLWISTLLLSSFIVYLL. C445 contributes to the heme binding site.

This sequence belongs to the cytochrome P450 family. The cofactor is heme. Expressed in young cromes.

Its subcellular location is the membrane. It catalyses the reaction a 3'-unsubstituted flavone + reduced [NADPH--hemoprotein reductase] + O2 = a 3'-hydroxyflavone + oxidized [NADPH--hemoprotein reductase] + H2O + H(+). The enzyme catalyses (2S)-naringenin + reduced [NADPH--hemoprotein reductase] + O2 = (S)-eriodictyol + oxidized [NADPH--hemoprotein reductase] + H2O + H(+). It carries out the reaction (2R,3R)-dihydrokaempferol + reduced [NADPH--hemoprotein reductase] + O2 = (2R,3R)-dihydroquercetin + oxidized [NADPH--hemoprotein reductase] + H2O + H(+). The catalysed reaction is kaempferol + reduced [NADPH--hemoprotein reductase] + O2 = quercetin + oxidized [NADPH--hemoprotein reductase] + H2O + H(+). The protein operates within flavonoid metabolism. Its function is as follows. Flavonoid 3'-hydroxylase that catalyzes the 3'-hydroxylation of flavanones, dihydroflavonols and flavonols. Converts narigenin to eriodictyol, dihydrokaempferol to dihydroquercetin and kaempferol to quercetin. This chain is Flavonoid 3'-monooxygenase CYP75B137, found in Crocosmia x crocosmiiflora (Montbretia).